The primary structure comprises 219 residues: Dynein light chain Tctex-type 4 (219 aa).

A disordered region spans residues 1 to 84 (MACRTLPSRR…RRPSLGPVPP (84 aa)). Residues 9-20 (RRQEEETTKDLA) are compositionally biased toward basic and acidic residues. Ser-64 is subject to Phosphoserine.

It belongs to the dynein light chain Tctex-type family. Interacts with ENG/endoglin, TGFBR2 and TGFBR3. Interacts with PPP1CC.

The protein resides in the cell projection. Its subcellular location is the cilium. It is found in the flagellum. It localises to the cytoplasmic vesicle. The protein localises to the secretory vesicle. The protein resides in the acrosome. Its subcellular location is the cytoplasm. It is found in the cytoskeleton. It localises to the cilium axoneme. The protein localises to the nucleus. The protein resides in the microtubule organizing center. This Mus musculus (Mouse) protein is Dynein light chain Tctex-type 4 (Dynlt4).